Reading from the N-terminus, the 98-residue chain is Large ribosomal subunit protein uL23 (98 aa).

It belongs to the universal ribosomal protein uL23 family. As to quaternary structure, part of the 50S ribosomal subunit. Contacts protein L29, and trigger factor when it is bound to the ribosome.

One of the early assembly proteins it binds 23S rRNA. One of the proteins that surrounds the polypeptide exit tunnel on the outside of the ribosome. Forms the main docking site for trigger factor binding to the ribosome. This chain is Large ribosomal subunit protein uL23, found in Bordetella petrii (strain ATCC BAA-461 / DSM 12804 / CCUG 43448).